Reading from the N-terminus, the 95-residue chain is Aspartyl/glutamyl-tRNA(Asn/Gln) amidotransferase subunit C (95 aa).

The protein belongs to the GatC family. Heterotrimer of A, B and C subunits.

It carries out the reaction L-glutamyl-tRNA(Gln) + L-glutamine + ATP + H2O = L-glutaminyl-tRNA(Gln) + L-glutamate + ADP + phosphate + H(+). It catalyses the reaction L-aspartyl-tRNA(Asn) + L-glutamine + ATP + H2O = L-asparaginyl-tRNA(Asn) + L-glutamate + ADP + phosphate + 2 H(+). In terms of biological role, allows the formation of correctly charged Asn-tRNA(Asn) or Gln-tRNA(Gln) through the transamidation of misacylated Asp-tRNA(Asn) or Glu-tRNA(Gln) in organisms which lack either or both of asparaginyl-tRNA or glutaminyl-tRNA synthetases. The reaction takes place in the presence of glutamine and ATP through an activated phospho-Asp-tRNA(Asn) or phospho-Glu-tRNA(Gln). The protein is Aspartyl/glutamyl-tRNA(Asn/Gln) amidotransferase subunit C of Pseudomonas fluorescens (strain ATCC BAA-477 / NRRL B-23932 / Pf-5).